A 272-amino-acid polypeptide reads, in one-letter code: ATP synthase subunit delta (272 aa).

The protein belongs to the ATPase delta chain family. In terms of assembly, F-type ATPases have 2 components, F(1) - the catalytic core - and F(0) - the membrane proton channel. F(1) has five subunits: alpha(3), beta(3), gamma(1), delta(1), epsilon(1). F(0) has three main subunits: a(1), b(2) and c(10-14). The alpha and beta chains form an alternating ring which encloses part of the gamma chain. F(1) is attached to F(0) by a central stalk formed by the gamma and epsilon chains, while a peripheral stalk is formed by the delta and b chains.

It is found in the cell membrane. In terms of biological role, f(1)F(0) ATP synthase produces ATP from ADP in the presence of a proton or sodium gradient. F-type ATPases consist of two structural domains, F(1) containing the extramembraneous catalytic core and F(0) containing the membrane proton channel, linked together by a central stalk and a peripheral stalk. During catalysis, ATP synthesis in the catalytic domain of F(1) is coupled via a rotary mechanism of the central stalk subunits to proton translocation. This protein is part of the stalk that links CF(0) to CF(1). It either transmits conformational changes from CF(0) to CF(1) or is implicated in proton conduction. This Corynebacterium urealyticum (strain ATCC 43042 / DSM 7109) protein is ATP synthase subunit delta.